The sequence spans 215 residues: Pyrrolidone-carboxylate peptidase (215 aa).

Residues Glu78, Cys141, and His165 contribute to the active site.

This sequence belongs to the peptidase C15 family. Homotetramer.

The protein resides in the cytoplasm. The enzyme catalyses Release of an N-terminal pyroglutamyl group from a polypeptide, the second amino acid generally not being Pro.. Its function is as follows. Removes 5-oxoproline from various penultimate amino acid residues except L-proline. The sequence is that of Pyrrolidone-carboxylate peptidase from Streptococcus pyogenes serotype M12 (strain MGAS2096).